The sequence spans 344 residues: Uroporphyrinogen decarboxylase (344 aa).

Residues arginine 26–arginine 30, phenylalanine 45, aspartate 75, tyrosine 151, serine 206, and histidine 320 each bind substrate.

The protein belongs to the uroporphyrinogen decarboxylase family. In terms of assembly, homodimer.

The protein resides in the cytoplasm. The enzyme catalyses uroporphyrinogen III + 4 H(+) = coproporphyrinogen III + 4 CO2. It participates in porphyrin-containing compound metabolism; protoporphyrin-IX biosynthesis; coproporphyrinogen-III from 5-aminolevulinate: step 4/4. Catalyzes the decarboxylation of four acetate groups of uroporphyrinogen-III to yield coproporphyrinogen-III. This Staphylococcus haemolyticus (strain JCSC1435) protein is Uroporphyrinogen decarboxylase.